A 791-amino-acid polypeptide reads, in one-letter code: Sphingomyelin phosphodiesterase 4 (791 aa).

The helical transmembrane segment at 755–775 (LFALLSFGLFSSTGLILIISF) threads the bilayer.

Requires Mg(2+) as cofactor.

The protein localises to the endoplasmic reticulum membrane. Its subcellular location is the golgi apparatus membrane. It localises to the nucleus envelope. The protein resides in the cell membrane. It is found in the sarcolemma. It catalyses the reaction a sphingomyelin + H2O = phosphocholine + an N-acylsphing-4-enine + H(+). Functionally, catalyzes the hydrolysis of membrane sphingomyelin to form phosphorylcholine and ceramide. It has a relevant role in the homeostasis of membrane sphingolipids, thereby influencing membrane integrity, and endoplasmic reticulum organization and function. May sensitize cells to DNA damage-induced apoptosis. This Danio rerio (Zebrafish) protein is Sphingomyelin phosphodiesterase 4 (smpd4).